A 62-amino-acid polypeptide reads, in one-letter code: Large ribosomal subunit protein uL30 (62 aa).

This sequence belongs to the universal ribosomal protein uL30 family. As to quaternary structure, part of the 50S ribosomal subunit.

The protein is Large ribosomal subunit protein uL30 of Kosmotoga olearia (strain ATCC BAA-1733 / DSM 21960 / TBF 19.5.1).